We begin with the raw amino-acid sequence, 510 residues long: ATP synthase subunit alpha (510 aa).

169-176 is a binding site for ATP; that stretch reads GDRQTGKT.

Belongs to the ATPase alpha/beta chains family. As to quaternary structure, F-type ATPases have 2 components, CF(1) - the catalytic core - and CF(0) - the membrane proton channel. CF(1) has five subunits: alpha(3), beta(3), gamma(1), delta(1), epsilon(1). CF(0) has three main subunits: a(1), b(2) and c(9-12). The alpha and beta chains form an alternating ring which encloses part of the gamma chain. CF(1) is attached to CF(0) by a central stalk formed by the gamma and epsilon chains, while a peripheral stalk is formed by the delta and b chains.

Its subcellular location is the cell inner membrane. It catalyses the reaction ATP + H2O + 4 H(+)(in) = ADP + phosphate + 5 H(+)(out). Produces ATP from ADP in the presence of a proton gradient across the membrane. The alpha chain is a regulatory subunit. This is ATP synthase subunit alpha from Anaeromyxobacter dehalogenans (strain 2CP-C).